Reading from the N-terminus, the 124-residue chain is Peptidyl-tRNA hydrolase (124 aa).

It belongs to the PTH2 family.

It localises to the cytoplasm. It catalyses the reaction an N-acyl-L-alpha-aminoacyl-tRNA + H2O = an N-acyl-L-amino acid + a tRNA + H(+). The natural substrate for this enzyme may be peptidyl-tRNAs which drop off the ribosome during protein synthesis. The polypeptide is Peptidyl-tRNA hydrolase (Aeropyrum pernix (strain ATCC 700893 / DSM 11879 / JCM 9820 / NBRC 100138 / K1)).